Here is a 217-residue protein sequence, read N- to C-terminus: 3,4-dihydroxy-2-butanone 4-phosphate synthase (217 aa).

D-ribulose 5-phosphate-binding positions include 37-38 (RE), aspartate 42, 150-154 (RQGHT), and glutamate 174. Glutamate 38 lines the Mg(2+) pocket. Position 153 (histidine 153) interacts with Mg(2+).

This sequence belongs to the DHBP synthase family. As to quaternary structure, homodimer. The cofactor is Mg(2+). Mn(2+) serves as cofactor.

It carries out the reaction D-ribulose 5-phosphate = (2S)-2-hydroxy-3-oxobutyl phosphate + formate + H(+). Its pathway is cofactor biosynthesis; riboflavin biosynthesis; 2-hydroxy-3-oxobutyl phosphate from D-ribulose 5-phosphate: step 1/1. Its function is as follows. Catalyzes the conversion of D-ribulose 5-phosphate to formate and 3,4-dihydroxy-2-butanone 4-phosphate. The sequence is that of 3,4-dihydroxy-2-butanone 4-phosphate synthase from Photorhabdus laumondii subsp. laumondii (strain DSM 15139 / CIP 105565 / TT01) (Photorhabdus luminescens subsp. laumondii).